Consider the following 122-residue polypeptide: Large ribosomal subunit protein uL14c (122 aa).

Belongs to the universal ribosomal protein uL14 family. As to quaternary structure, part of the 50S ribosomal subunit.

It localises to the plastid. In terms of biological role, binds to 23S rRNA. In Cuscuta gronovii (Common dodder), this protein is Large ribosomal subunit protein uL14c.